The primary structure comprises 439 residues: S-layer protein (439 aa).

The first 30 residues, 1 to 30 (MKKNLRIVSAAAAALLAVAPIAATAMPVNA), serve as a signal peptide directing secretion.

Glycosylated.

It is found in the secreted. The protein resides in the cell wall. The protein localises to the S-layer. The S-layer is a paracrystalline mono-layered assembly of proteins which coat the surface of bacteria. The protein is S-layer protein (slpH) of Lactobacillus helveticus (Lactobacillus suntoryeus).